The chain runs to 653 residues: Modification methylase StsI (653 aa).

It belongs to the N(4)/N(6)-methyltransferase family. As to quaternary structure, monomer.

The enzyme catalyses a 2'-deoxyadenosine in DNA + S-adenosyl-L-methionine = an N(6)-methyl-2'-deoxyadenosine in DNA + S-adenosyl-L-homocysteine + H(+). In terms of biological role, an alpha subtype methylase that recognizes the double-stranded sequence 5'-GGATG-3' in one strand and 3'-CATCC-5' in the other, methylates A of both strands, and protects the DNA from cleavage by the StsI endonuclease. The 2 domains of the protein participate in modification of the two strands. This chain is Modification methylase StsI (stsIM), found in Streptococcus sanguinis.